We begin with the raw amino-acid sequence, 65 residues long: Large ribosomal subunit protein bL35 (65 aa).

The protein belongs to the bacterial ribosomal protein bL35 family.

The chain is Large ribosomal subunit protein bL35 from Acaryochloris marina (strain MBIC 11017).